The primary structure comprises 228 residues: Translation initiation factor 6 (228 aa).

Binds to the 50S ribosomal subunit and prevents its association with the 30S ribosomal subunit to form the 70S initiation complex. The chain is Translation initiation factor 6 from Methanocaldococcus jannaschii (strain ATCC 43067 / DSM 2661 / JAL-1 / JCM 10045 / NBRC 100440) (Methanococcus jannaschii).